Reading from the N-terminus, the 151-residue chain is SsrA-binding protein (151 aa).

Positions Gly-121–Ala-151 are disordered. The span at Asp-126 to Arg-142 shows a compositional bias: basic and acidic residues.

It belongs to the SmpB family.

The protein localises to the cytoplasm. Functionally, required for rescue of stalled ribosomes mediated by trans-translation. Binds to transfer-messenger RNA (tmRNA), required for stable association of tmRNA with ribosomes. tmRNA and SmpB together mimic tRNA shape, replacing the anticodon stem-loop with SmpB. tmRNA is encoded by the ssrA gene; the 2 termini fold to resemble tRNA(Ala) and it encodes a 'tag peptide', a short internal open reading frame. During trans-translation Ala-aminoacylated tmRNA acts like a tRNA, entering the A-site of stalled ribosomes, displacing the stalled mRNA. The ribosome then switches to translate the ORF on the tmRNA; the nascent peptide is terminated with the 'tag peptide' encoded by the tmRNA and targeted for degradation. The ribosome is freed to recommence translation, which seems to be the essential function of trans-translation. The sequence is that of SsrA-binding protein from Chromobacterium violaceum (strain ATCC 12472 / DSM 30191 / JCM 1249 / CCUG 213 / NBRC 12614 / NCIMB 9131 / NCTC 9757 / MK).